Consider the following 103-residue polypeptide: UPF0102 protein aq_041 (103 aa).

The protein belongs to the UPF0102 family.

The chain is UPF0102 protein aq_041 from Aquifex aeolicus (strain VF5).